The sequence spans 68 residues: MAKICDHCGKKPQSGNNVSHANNKSKRRFEPNLVSVRAQLPSGEVKTVTVCTRCLRSGAVVKPVAKHA.

Positions 1–30 (MAKICDHCGKKPQSGNNVSHANNKSKRRFE) are disordered. Residues 13 to 22 (QSGNNVSHAN) are compositionally biased toward polar residues.

Belongs to the bacterial ribosomal protein bL28 family.

The sequence is that of Large ribosomal subunit protein bL28 from Solidesulfovibrio magneticus (strain ATCC 700980 / DSM 13731 / RS-1) (Desulfovibrio magneticus).